The chain runs to 98 residues: NADH-ubiquinone oxidoreductase chain 4L (98 aa).

A run of 3 helical transmembrane segments spans residues methionine 1–methionine 21, histidine 25–threonine 45, and methionine 59–valine 81.

It belongs to the complex I subunit 4L family. As to quaternary structure, core subunit of respiratory chain NADH dehydrogenase (Complex I) which is composed of 45 different subunits.

It is found in the mitochondrion inner membrane. The enzyme catalyses a ubiquinone + NADH + 5 H(+)(in) = a ubiquinol + NAD(+) + 4 H(+)(out). In terms of biological role, core subunit of the mitochondrial membrane respiratory chain NADH dehydrogenase (Complex I) which catalyzes electron transfer from NADH through the respiratory chain, using ubiquinone as an electron acceptor. Part of the enzyme membrane arm which is embedded in the lipid bilayer and involved in proton translocation. This is NADH-ubiquinone oxidoreductase chain 4L (MT-ND4L) from Equus asinus (Donkey).